The primary structure comprises 218 residues: ATP phosphoribosyltransferase (218 aa).

It belongs to the ATP phosphoribosyltransferase family. Short subfamily. In terms of assembly, heteromultimer composed of HisG and HisZ subunits.

It localises to the cytoplasm. The catalysed reaction is 1-(5-phospho-beta-D-ribosyl)-ATP + diphosphate = 5-phospho-alpha-D-ribose 1-diphosphate + ATP. It functions in the pathway amino-acid biosynthesis; L-histidine biosynthesis; L-histidine from 5-phospho-alpha-D-ribose 1-diphosphate: step 1/9. Functionally, catalyzes the condensation of ATP and 5-phosphoribose 1-diphosphate to form N'-(5'-phosphoribosyl)-ATP (PR-ATP). Has a crucial role in the pathway because the rate of histidine biosynthesis seems to be controlled primarily by regulation of HisG enzymatic activity. This Lactiplantibacillus plantarum (strain ATCC BAA-793 / NCIMB 8826 / WCFS1) (Lactobacillus plantarum) protein is ATP phosphoribosyltransferase.